The following is a 288-amino-acid chain: Fe-S cluster assembly protein dre2 (288 aa).

An N-terminal SAM-like domain region spans residues 1 to 127; the sequence is MSSSVLVLTS…LSRPNQVEAV (127 aa). Positions 128-177 are linker; that stretch reads PIKLSNKNGQSASKNKILDFLKSDKENLISGDDDQELIDEDELLDESAHD. 4 residues coordinate [2Fe-2S] cluster: C185, C196, C199, and C201. The segment at 185–201 is fe-S binding site A; the sequence is CKPEPGKKKRACKNCTC. [4Fe-4S] cluster-binding residues include C244, C247, C255, and C258. Short sequence motifs (cx2C motif) lie at residues 244–247 and 255–258; these read CGNC and CSGC. The interval 244–258 is fe-S binding site B; sequence CGNCYLGDAFRCSGC.

It belongs to the anamorsin family. Monomer. Interacts with tah18. Interacts with tim40. The cofactor is [2Fe-2S] cluster. Requires [4Fe-4S] cluster as cofactor.

The protein localises to the cytoplasm. It is found in the mitochondrion intermembrane space. In terms of biological role, component of the cytosolic iron-sulfur (Fe-S) protein assembly (CIA) machinery required for the maturation of extramitochondrial Fe-S proteins. Part of an electron transfer chain functioning in an early step of cytosolic Fe-S biogenesis, facilitating the de novo assembly of a [4Fe-4S] cluster on the scaffold complex cfd1-nbp35. Electrons are transferred to dre2 from NADPH via the FAD- and FMN-containing protein tah18. Tah18-dre2 are also required for the assembly of the diferric tyrosyl radical cofactor of ribonucleotide reductase (RNR), probably by providing electrons for reduction during radical cofactor maturation in the catalytic small subunit suc22. The protein is Fe-S cluster assembly protein dre2 of Schizosaccharomyces pombe (strain 972 / ATCC 24843) (Fission yeast).